Here is a 216-residue protein sequence, read N- to C-terminus: Leucyl/phenylalanyl-tRNA--protein transferase (216 aa).

Belongs to the L/F-transferase family.

The protein resides in the cytoplasm. It carries out the reaction N-terminal L-lysyl-[protein] + L-leucyl-tRNA(Leu) = N-terminal L-leucyl-L-lysyl-[protein] + tRNA(Leu) + H(+). The enzyme catalyses N-terminal L-arginyl-[protein] + L-leucyl-tRNA(Leu) = N-terminal L-leucyl-L-arginyl-[protein] + tRNA(Leu) + H(+). It catalyses the reaction L-phenylalanyl-tRNA(Phe) + an N-terminal L-alpha-aminoacyl-[protein] = an N-terminal L-phenylalanyl-L-alpha-aminoacyl-[protein] + tRNA(Phe). Functionally, functions in the N-end rule pathway of protein degradation where it conjugates Leu, Phe and, less efficiently, Met from aminoacyl-tRNAs to the N-termini of proteins containing an N-terminal arginine or lysine. The sequence is that of Leucyl/phenylalanyl-tRNA--protein transferase from Maricaulis maris (strain MCS10) (Caulobacter maris).